The primary structure comprises 182 residues: Transmembrane protein 11 homolog, mitochondrial (182 aa).

The residue at position 25 (Ser-25) is a Phosphoserine. Transmembrane regions (helical) follow at residues Thr-70–Pro-89 and Ile-91–Val-108.

Belongs to the TMEM11 family.

The protein localises to the mitochondrion inner membrane. Functionally, plays a role in mitochondrial morphogenesis. This is Transmembrane protein 11 homolog, mitochondrial (Pmi) from Drosophila melanogaster (Fruit fly).